Reading from the N-terminus, the 305-residue chain is GS homeobox 2 (305 aa).

2 disordered regions span residues Asp115–Ala151 and Lys259–Leu305. Residues Ser123–Gln140 show a composition bias toward basic residues. The segment covering Pro141 to Ala151 has biased composition (low complexity). Residues Gly203–Gly262 constitute a DNA-binding region (homeobox).

Belongs to the Antp homeobox family.

It is found in the nucleus. Its function is as follows. Transcription factor that binds 5'-CNAATTAG-3' DNA sequence and regulates the expression of numerous genes including genes important for brain development. During telencephalic development, causes ventralization of pallial progenitors and, depending on the developmental stage, specifies different neuronal fates. At early stages, necessary and sufficient to correctly specify the ventral lateral ganglionic eminence (LGE) and its major derivatives, the striatal projection neurons. At later stages, may specify LGE progenitors toward dorsal LGE fates, including olfactory bulb interneurons. This Mus musculus (Mouse) protein is GS homeobox 2 (Gsx2).